A 343-amino-acid chain; its full sequence is Small ribosomal subunit biogenesis GTPase RsgA (343 aa).

The interval 1–32 is disordered; that stretch reads MAKRRLSKRQVDRIRERQSQRLDTSVAAPDGK. Residues 9–20 are compositionally biased toward basic and acidic residues; the sequence is RQVDRIRERQSQ. The CP-type G domain occupies 109 to 273; sequence YGKLKPVAAN…CIDSPGIREF (165 aa). GTP contacts are provided by residues 156-159 and 215-223; these read NKLD and GQSGVGKSS. The Zn(2+) site is built by Cys297, Cys302, His304, and Cys310.

It belongs to the TRAFAC class YlqF/YawG GTPase family. RsgA subfamily. As to quaternary structure, monomer. Associates with 30S ribosomal subunit, binds 16S rRNA. Requires Zn(2+) as cofactor.

Its subcellular location is the cytoplasm. Functionally, one of several proteins that assist in the late maturation steps of the functional core of the 30S ribosomal subunit. Helps release RbfA from mature subunits. May play a role in the assembly of ribosomal proteins into the subunit. Circularly permuted GTPase that catalyzes slow GTP hydrolysis, GTPase activity is stimulated by the 30S ribosomal subunit. This chain is Small ribosomal subunit biogenesis GTPase RsgA, found in Saccharophagus degradans (strain 2-40 / ATCC 43961 / DSM 17024).